Reading from the N-terminus, the 445-residue chain is Fibrinogen gamma chain (445 aa).

Positions 1 to 25 (MNWSLQLRSFILCWALLLLSPTGLA) are cleaved as a signal peptide. N-linked (GlcNAc...) asparagine glycosylation is present at Asn-78. A Fibrinogen C-terminal domain is found at 170-416 (RIHDTTGKDC…ETTMKIIPFN (247 aa)). Cys-179 and Cys-208 form a disulfide bridge. Positions 344, 346, and 350 each coordinate Ca(2+). Cys-352 and Cys-365 form a disulfide bridge. A gamma-chain polymerization, binding amino end of another fibrin alpha chain region spans residues 400 to 422 (TRWYSMKETTMKIIPFNRLSIGD). Gln-424 is covalently cross-linked (Isoglutamyl lysine isopeptide (Gln-Lys) (interchain with K-432)). The segment at 424–445 (QQHHMGGSKQVSVEHEVDVEYP) is disordered. Ser-431 bears the Phosphoserine mark. Lys-432 is covalently cross-linked (Isoglutamyl lysine isopeptide (Lys-Gln) (interchain with Q-424)). Residues 435 to 445 (SVEHEVDVEYP) show a composition bias toward basic and acidic residues.

In terms of assembly, heterohexamer; disulfide linked. Contains 2 sets of 3 non-identical chains (alpha, beta and gamma). The 2 heterotrimers are in head to head conformation with the N-termini in a small central domain. Conversion of fibrinogen to fibrin is triggered by thrombin, which cleaves fibrinopeptides A and B from alpha and beta chains, and thus exposes the N-terminal polymerization sites responsible for the formation of the soft clot. The soft clot is converted into the hard clot by factor XIIIA which catalyzes the epsilon-(gamma-glutamyl)lysine cross-linking between gamma chains (stronger) and between alpha chains (weaker) of different monomers.

Its subcellular location is the secreted. In terms of biological role, together with fibrinogen alpha (FGA) and fibrinogen beta (FGB), polymerizes to form an insoluble fibrin matrix. Has a major function in hemostasis as one of the primary components of blood clots. In addition, functions during the early stages of wound repair to stabilize the lesion and guide cell migration during re-epithelialization. Was originally thought to be essential for platelet aggregation, based on in vitro studies using anticoagulated blood. However, subsequent studies have shown that it is not absolutely required for thrombus formation in vivo. Enhances expression of SELP in activated platelets via an ITGB3-dependent pathway. Maternal fibrinogen is essential for successful pregnancy. Fibrin deposition is also associated with infection, where it protects against IFNG-mediated hemorrhage. May also facilitate the antibacterial immune response via both innate and T-cell mediated pathways. The chain is Fibrinogen gamma chain (Fgg) from Rattus norvegicus (Rat).